Here is a 1863-residue protein sequence, read N- to C-terminus: E3 ubiquitin-protein ligase ubr3 (1863 aa).

A UBR-type zinc finger spans residues threonine 80–leucine 151. Disordered regions lie at residues leucine 302–lysine 330, proline 970–phenylalanine 995, and isoleucine 1128–glutamate 1152. 2 stretches are compositionally biased toward basic and acidic residues: residues glutamate 971 to threonine 984 and serine 1134 to glutamate 1152. The RING-type; degenerate zinc-finger motif lies at aspartate 1270 to arginine 1328.

This sequence belongs to the E3 ubiquitin-protein ligase UBR1-like family.

It carries out the reaction S-ubiquitinyl-[E2 ubiquitin-conjugating enzyme]-L-cysteine + [acceptor protein]-L-lysine = [E2 ubiquitin-conjugating enzyme]-L-cysteine + N(6)-ubiquitinyl-[acceptor protein]-L-lysine.. The protein operates within protein modification; protein ubiquitination. In terms of biological role, E3 ubiquitin-protein ligase which is a component of the N-end rule pathway. Recognizes and binds to proteins bearing specific N-terminal residues, leading to their ubiquitination and subsequent degradation. Positively regulates hedgehog/shh-signaling pathways that function in eye development, neuronal specification and somite development. Activation of shh up-regulates transcription of ubr3, which in turn promotes hedgehog/shh signaling possibly by controlling negative regulators such as Kif7. This is E3 ubiquitin-protein ligase ubr3 from Danio rerio (Zebrafish).